A 265-amino-acid polypeptide reads, in one-letter code: ClpXP adapter protein SpxH (265 aa).

This sequence belongs to the SpxH family. Interacts with Spx.

The protein localises to the cytoplasm. Adapter protein required for efficient degradation of Spx by ClpXP under non-stress conditions. Interaction with Spx stabilizes Spx and exposes the C-terminus of Spx for recognition and proteolysis by ClpXP. This chain is ClpXP adapter protein SpxH, found in Staphylococcus haemolyticus (strain JCSC1435).